Reading from the N-terminus, the 359-residue chain is Type-1 angiotensin II receptor (359 aa).

The Extracellular segment spans residues 1-25 (MILNSSTEDGIKRIQDDCPKAGRHN). Asparagine 4 is a glycosylation site (N-linked (GlcNAc...) asparagine). 2 residues coordinate angiotensin II: glutamine 15 and aspartate 17. Intrachain disulfides connect cysteine 18/cysteine 274 and cysteine 101/cysteine 180. A helical transmembrane segment spans residues 26–55 (YIFIMIPTLYSIIFVVGLFGNSLVVIVIYF). Residues 56-61 (YMKLKT) lie on the Cytoplasmic side of the membrane. Residues 62-89 (VASVFLLNLALADLCFLLTLPLWAVYTA) form a helical membrane-spanning segment. At 90-98 (MEYRWPFGN) the chain is on the extracellular side. A helical membrane pass occupies residues 99 to 125 (YLCKIASGSVSFNLYASVFLLTCLSID). Topologically, residues 126–141 (RYLAIVHPMKSRLRRT) are cytoplasmic. A helical membrane pass occupies residues 142-165 (MLVAKVTCIIIWLLAGLASLPTII). Residues 166–190 (HRNVFFIENTNITVCAFHYESQNST) lie on the Extracellular side of the membrane. An angiotensin II-binding site is contributed by arginine 167. A glycan (N-linked (GlcNAc...) asparagine) is linked at asparagine 176. Angiotensin II-binding residues include phenylalanine 182, histidine 183, and tyrosine 184. An N-linked (GlcNAc...) asparagine glycan is attached at asparagine 188. A helical transmembrane segment spans residues 191–216 (LPVGLGLTKNILGFLFPFLIILTSYT). Residue lysine 199 coordinates angiotensin II. Residues 217–239 (LIWKTLKKAYEIQKNKPRKDDIF) are Cytoplasmic-facing. A helical membrane pass occupies residues 240 to 268 (KIILAIVLFFFFSWVPHQIFTFMDVLIQL). Topologically, residues 269-278 (GLIRDCKIED) are extracellular. The helical transmembrane segment at 279-304 (IVDTAMPITICLAYFNNCLNPPFYGF) threads the bilayer. Topologically, residues 305–359 (LGKKFKKYFLQLLKYIPPKAKSHSNLSTKMSTLSYRPSENGNSSTKKPAPCTEVE) are cytoplasmic. A compositionally biased stretch (polar residues) spans 335–350 (STLSYRPSENGNSSTK). Positions 335–359 (STLSYRPSENGNSSTKKPAPCTEVE) are disordered. Cysteine 355 is lipidated: S-palmitoyl cysteine.

Belongs to the G-protein coupled receptor 1 family. Interacts with MAS1. Interacts with ARRB1. Interacts with FLNA (via filamin repeat 21); increases PKA-mediated phosphorylation of FLNA. C-terminal Ser or Thr residues may be phosphorylated.

Its subcellular location is the cell membrane. Receptor for angiotensin II, a vasoconstricting peptide, which acts as a key regulator of blood pressure and sodium retention by the kidney. The activated receptor in turn couples to G-alpha proteins G(q) (GNAQ, GNA11, GNA14 or GNA15) and thus activates phospholipase C and increases the cytosolic Ca(2+) concentrations, which in turn triggers cellular responses such as stimulation of protein kinase C. The polypeptide is Type-1 angiotensin II receptor (AGTR1) (Ovis aries (Sheep)).